The chain runs to 3546 residues: Ubiquitin carboxyl-terminal hydrolase 34 (3546 aa).

Phosphoserine occurs at positions 352, 486, 487, and 490. Disordered stretches follow at residues 502 to 535, 550 to 679, and 1459 to 1478; these read KEEE…SGGS, VQQR…VFNT, and TGSY…DQVE. The span at 511-524 shows a compositional bias: low complexity; it reads APSPWSPAASPQSS. Composition is skewed to polar residues over residues 525 to 534 and 560 to 570; these read DNSDTHQSGG and SMQGSSDETAN. Low complexity predominate over residues 571-590; sequence SGEDGSSGPGSSSGHSDGSS. A compositionally biased stretch (polar residues) spans 591–609; sequence NEVNSSHASQSAGSPGSEV. The span at 610–627 shows a compositional bias: acidic residues; it reads QSEDIADIEALKEEDEDD. Phosphoserine is present on serine 649. Residues 659–671 are compositionally biased toward polar residues; it reads QGMSERNGTSSGT. Residues 1467–1477 are compositionally biased toward acidic residues; sequence PDSDDSSEDQV. At serine 1469 the chain carries Phosphoserine. The region spanning 1894-2239 is the USP domain; that stretch reads VGLTNLGATC…SAYMLFYKRM (346 aa). Cysteine 1903 acts as the Nucleophile in catalysis. Histidine 2164 functions as the Proton acceptor in the catalytic mechanism. Serine 2488 is modified (phosphoserine). The interval 3331 to 3443 is disordered; that stretch reads NSLQEQEAKE…HAEEQSNNGR (113 aa). A compositionally biased stretch (basic and acidic residues) spans 3336 to 3347; sequence QEAKERKTKDDE. A phosphoserine mark is found at serine 3358 and serine 3359. At threonine 3381 the chain carries Phosphothreonine. 2 positions are modified to phosphoserine: serine 3386 and serine 3406. Residues 3421 to 3432 show a composition bias toward polar residues; sequence SSFSEDMSNIRS. Positions 3433 to 3443 are enriched in basic and acidic residues; it reads QHAEEQSNNGR. The residue at position 3503 (serine 3503) is a Phosphoserine.

It belongs to the peptidase C19 family. In terms of assembly, interacts with AXIN1 and AXIN2. Expressed in brain at low level.

It catalyses the reaction Thiol-dependent hydrolysis of ester, thioester, amide, peptide and isopeptide bonds formed by the C-terminal Gly of ubiquitin (a 76-residue protein attached to proteins as an intracellular targeting signal).. In terms of biological role, ubiquitin hydrolase that can remove conjugated ubiquitin from AXIN1 and AXIN2, thereby acting as a regulator of Wnt signaling pathway. Acts as an activator of the Wnt signaling pathway downstream of the beta-catenin destruction complex by deubiquitinating and stabilizing AXIN1 and AXIN2, leading to promote nuclear accumulation of AXIN1 and AXIN2 and positively regulate beta-catenin (CTNBB1)-mediated transcription. Recognizes and hydrolyzes the peptide bond at the C-terminal Gly of ubiquitin. Involved in the processing of poly-ubiquitin precursors as well as that of ubiquitinated proteins. The chain is Ubiquitin carboxyl-terminal hydrolase 34 (USP34) from Homo sapiens (Human).